The chain runs to 419 residues: Voltage-gated potassium channel subunit beta-1 (419 aa).

The tract at residues 1–51 (MLAARTGAAGSQIAEESSKLRKQAAFSGGSKDRSPKKASENVKDSSLSPSG) is disordered. Residues 30–43 (SKDRSPKKASENVK) show a composition bias toward basic and acidic residues. NADP(+)-binding residues include T108, W109, Q115, and D137. Y142 acts as the Proton donor/acceptor in catalysis. NADP(+)-binding residues include N210, S240, R241, Q266, W295, S296, P297, L298, A299, C300, K306, R316, G375, S377, Q381, E384, and N385.

This sequence belongs to the shaker potassium channel beta subunit family. Homotetramer. Interaction with tetrameric potassium channel alpha subunits gives rise to a heterooctamer. Identified in potassium channel complexes containing KCNA1, KCNA2, KCNA4, KCNA5, KCNA6, KCNAB1 and KCNAB2. Part of a complex containing KCNA1, KCNA4 and LGI1; interaction with LGI1 inhibits down-regulation of KCNA1 channel activity. Interacts with the dimer formed by GNB1 and GNG2; this enhances KCNA1 binding. Interacts with SQSTM1. Detected in portal vein myocytes (at protein level).

It localises to the cytoplasm. The protein resides in the membrane. It is found in the cell membrane. It carries out the reaction a primary alcohol + NADP(+) = an aldehyde + NADPH + H(+). It catalyses the reaction a secondary alcohol + NADP(+) = a ketone + NADPH + H(+). In terms of biological role, regulatory subunit of the voltage-gated potassium (Kv) channels composed of pore-forming and potassium-conducting alpha subunits and of regulatory beta subunits. The beta-1/KCNAB1 cytoplasmic subunit mediates closure of delayed rectifier potassium channels by physically obstructing the pore via its N-terminal domain and increases the speed of channel closure for other family members. Promotes the inactivation of KCNA1, KCNA2, KCNA4, KCNA5 and KCNA6 alpha subunit-containing channels. Displays nicotinamide adenine dinucleotide phosphate (NADPH)-dependent aldoketoreductase activity by catalyzing the NADPH-dependent reduction of a variety of endogenous aldehydes and ketones. The binding of NADPH is required for efficient down-regulation of potassium channel activity. Oxidation of the bound NADPH restrains N-terminal domain from blocking the channel, thereby decreasing N-type inactivation of potassium channel activity. This chain is Voltage-gated potassium channel subunit beta-1 (KCNAB1), found in Oryctolagus cuniculus (Rabbit).